Here is a 591-residue protein sequence, read N- to C-terminus: Lysyl oxidase homolog 1 (591 aa).

The signal sequence occupies residues 1 to 22 (MALALTGWQLVWGACVCVLVHG). Residues 23–91 (QQAPPGQGSD…PRRRGGLRRR (69 aa)) constitute a propeptide that is removed on maturation. Disordered stretches follow at residues 77–107 (APQA…SDTV) and 233–373 (EYGG…RLSV). Over residues 82–92 (PRRRGGLRRRQ) the composition is skewed to basic residues. A compositionally biased stretch (gly residues) spans 298 to 313 (NGGGGGGTYGGGGGDP). Positions 319–386 (PPYGNMPPEA…YRPNQNGRGL (68 aa)) are interaction with FBLN5. The segment at 387–591 (PDLVPDPNYV…STTNCKIVQS (205 aa)) is lysyl-oxidase like. Cystine bridges form between cysteine 412–cysteine 418, cysteine 465–cysteine 514, cysteine 498–cysteine 504, cysteine 525–cysteine 535, and cysteine 572–cysteine 586. Positions 466, 468, and 470 each coordinate Cu cation. The lysine tyrosylquinone (Lys-Tyr) cross-link spans 494-529 (KASFCLEDSTCDFGNLKRYACTSHTQGLSPGCYDTY). 2',4',5'-topaquinone is present on tyrosine 529.

This sequence belongs to the lysyl oxidase family. Interacts (via propeptide) with EFEMP2. Interacts with FBLN5. It depends on Cu cation as a cofactor. Lysine tyrosylquinone residue serves as cofactor. The lysine tyrosylquinone cross-link (LTQ) is generated by condensation of the epsilon-amino group of a lysine with a topaquinone produced by oxidation of tyrosine. In terms of processing, proteolytic processing by a furin-like protease causes removal of N-terminal propeptide resulting in an enzyme largely inactive, but further proteolytic processing by BMP1 results in enzyme activation.

The protein localises to the secreted. Its subcellular location is the extracellular space. It is found in the extracellular matrix. The catalysed reaction is L-lysyl-[protein] + O2 + H2O = (S)-2-amino-6-oxohexanoyl-[protein] + H2O2 + NH4(+). Functionally, catalyzes the oxidative deamination of lysine and hydroxylysine residues in collagen and elastin, resulting in the formation of covalent cross-linkages, and the stabilization of collagen and elastin fibers. Essential for the elastic fiber homeostasis and for their maintenance at adult age. In Bos taurus (Bovine), this protein is Lysyl oxidase homolog 1 (LOXL1).